Consider the following 464-residue polypeptide: Armadillo repeat-containing protein 6 homolog (464 aa).

Residue threonine 9 is modified to Phosphothreonine. ARM repeat units follow at residues 235 to 275 (AHEH…TLAV), 287 to 331 (GGLK…QQGV), 332 to 374 (APII…FDTG), and 375 to 418 (IAEV…ISFG).

This sequence belongs to the ARMC6 family.

The polypeptide is Armadillo repeat-containing protein 6 homolog (Drosophila melanogaster (Fruit fly)).